The chain runs to 309 residues: Taste receptor type 2 member 64 (309 aa).

The Extracellular segment spans residues 1–3; that stretch reads MVY. The helical transmembrane segment at 4-26 threads the bilayer; it reads FLLIILSILVVFAFVLGNFSNGF. Residues 27–46 lie on the Cytoplasmic side of the membrane; the sequence is VALVNVIDWVKTRKISSADQ. Residues 47-69 form a helical membrane-spanning segment; it reads ILTALVVSRIGLLWVILFHWYAN. The Extracellular portion of the chain corresponds to 70–83; sequence VFNSALYSSEVGAV. A helical membrane pass occupies residues 84–106; it reads ASNISAIINHFSIWLAASLGIFY. The Cytoplasmic portion of the chain corresponds to 107–126; the sequence is LLKIANFSNLIFLHLKKRIR. A helical membrane pass occupies residues 127–149; it reads SVVLVILLGPLVFLICNLAVITM. The Extracellular segment spans residues 150 to 176; the sequence is DERVWTKEYEGNVTWKIKLRNAIHLSD. N-linked (GlcNAc...) asparagine glycosylation occurs at Asn-161. The helical transmembrane segment at 177 to 199 threads the bilayer; the sequence is LTVSTLANLIPFILTLICFLLLI. Topologically, residues 200–230 are cytoplasmic; the sequence is CSLHKHLKKMQLHGKGSQDLSTKVHIKALQT. Residues 231–253 form a helical membrane-spanning segment; that stretch reads VISFLMLYAIYFLYLITLTWNLW. Topologically, residues 254 to 258 are extracellular; it reads TQQNK. The helical transmembrane segment at 259 to 281 threads the bilayer; that stretch reads LVFLLCQTLGIMYPSFHSFFLIM. The Cytoplasmic segment spans residues 282–309; the sequence is GSRKLKQTFLSVLCQVTCLVKGQQPSTP.

The protein belongs to the G-protein coupled receptor T2R family.

The protein resides in the membrane. Functionally, receptor that may play a role in the perception of bitterness and is gustducin-linked. May play a role in sensing the chemical composition of the gastrointestinal content. The activity of this receptor may stimulate alpha gustducin, mediate PLC-beta-2 activation and lead to the gating of TRPM5. The polypeptide is Taste receptor type 2 member 64 (TAS2R64) (Pan paniscus (Pygmy chimpanzee)).